A 592-amino-acid polypeptide reads, in one-letter code: Potassium-transporting ATPase potassium-binding subunit (592 aa).

Transmembrane regions (helical) follow at residues 7–27 (LQTV…GTFM), 71–91 (VLFN…QHLL), 136–156 (GLTV…IAVI), 179–199 (LYIL…QGVI), 287–307 (LEIL…GAMV), 314–334 (WTLL…LQGV), 411–431 (GLYT…LMIG), 449–469 (SVVT…IAMI), 473–493 (AVAA…YAFA), 515–535 (ILGA…VLAM), and 559–579 (FALW…FPAL).

It belongs to the KdpA family. In terms of assembly, the system is composed of three essential subunits: KdpA, KdpB and KdpC.

Its subcellular location is the cell inner membrane. Part of the high-affinity ATP-driven potassium transport (or Kdp) system, which catalyzes the hydrolysis of ATP coupled with the electrogenic transport of potassium into the cytoplasm. This subunit binds the periplasmic potassium ions and delivers the ions to the membrane domain of KdpB through an intramembrane tunnel. The polypeptide is Potassium-transporting ATPase potassium-binding subunit (Geobacter sulfurreducens (strain ATCC 51573 / DSM 12127 / PCA)).